The chain runs to 556 residues: CDP-diacylglycerol--glycerol-3-phosphate 3-phosphatidyltransferase, mitochondrial (556 aa).

A mitochondrion-targeting transit peptide spans 1 to 28 (MAVAAAAAAGPVFWRRLLGLLPGRPGLA). Ser-49 is modified (phosphoserine). 124–131 (ASLYLGTG) serves as a coordination point for ATP. 2 consecutive PLD phosphodiesterase domains span residues 215–241 (TIGLQHIKVYLFDNSVILSGANLSDSY) and 460–493 (RGWTFHAKGLWLYLAGSSLPCLTLIGSPNFGYRS). Catalysis depends on residues His-220, Lys-222, and Asp-227.

It belongs to the CDP-alcohol phosphatidyltransferase class-II family.

The protein localises to the mitochondrion. The enzyme catalyses a CDP-1,2-diacyl-sn-glycerol + sn-glycerol 3-phosphate = a 1,2-diacyl-sn-glycero-3-phospho-(1'-sn-glycero-3'-phosphate) + CMP + H(+). The protein operates within phospholipid metabolism; phosphatidylglycerol biosynthesis; phosphatidylglycerol from CDP-diacylglycerol: step 1/2. Its activity is regulated as follows. Activated by calcium and magnesium and inhibited by other bivalent cations. In terms of biological role, functions in the biosynthesis of the anionic phospholipids phosphatidylglycerol and cardiolipin. In Homo sapiens (Human), this protein is CDP-diacylglycerol--glycerol-3-phosphate 3-phosphatidyltransferase, mitochondrial (PGS1).